Reading from the N-terminus, the 62-residue chain is Photosystem II reaction center protein Z (62 aa).

2 consecutive transmembrane segments (helical) span residues Leu8–Ala28 and Tyr41–Ile61.

This sequence belongs to the PsbZ family. PSII is composed of 1 copy each of membrane proteins PsbA, PsbB, PsbC, PsbD, PsbE, PsbF, PsbH, PsbI, PsbJ, PsbK, PsbL, PsbM, PsbT, sbX, PsbY, PsbZ, Psb30/Ycf12, at least 3 peripheral proteins of the oxygen-evolving complex and a large number of cofactors. It forms dimeric complexes.

The protein resides in the plastid. The protein localises to the chloroplast thylakoid membrane. May control the interaction of photosystem II (PSII) cores with the light-harvesting antenna, regulates electron flow through the 2 photosystem reaction centers. PSII is a light-driven water plastoquinone oxidoreductase, using light energy to abstract electrons from H(2)O, generating a proton gradient subsequently used for ATP formation. The polypeptide is Photosystem II reaction center protein Z (Gracilaria tenuistipitata var. liui (Red alga)).